The primary structure comprises 307 residues: Woronin sorting complex protein (307 aa).

Helical transmembrane passes span 106 to 125, 146 to 167, and 207 to 227; these read MATYGALVSAPLGHFLIWIL, NLIVAPIQNSVYLVAMAIIAGA, and AWMPFFNLVSFFIGTYINYIT. A compositionally biased stretch (basic and acidic residues) spans 241–264; the sequence is GDGAHGDHRHDRERERDRERERHS. Residues 241–307 form a disordered region; that stretch reads GDGAHGDHRH…YPSLGQNPRY (67 aa). Positions 266–278 are enriched in low complexity; that stretch reads PPHGHGPSHGGRP.

The protein belongs to the peroxisomal membrane protein PXMP2/4 family. In terms of assembly, self-assembles into detergent-resistant oligomers and forms a complex with hex-1 assemblies.

It is found in the peroxisome membrane. It localises to the cell septum. In terms of biological role, woronin sorting complex protein involved in both Woronin bodies (WB) formation and inherence. Localizes to large peroxisome membranes where it self-assembles into detergent-resistant oligomers that envelop hex-1 assemblies, producing asymmetrical nascent WBs. These structures are then delivered to the cell cortex, which permits partitioning of the nascent WB and WB inheritance. This chain is Woronin sorting complex protein, found in Neurospora crassa (strain ATCC 24698 / 74-OR23-1A / CBS 708.71 / DSM 1257 / FGSC 987).